The primary structure comprises 399 residues: Acetate kinase (399 aa).

N7 provides a ligand contact to Mg(2+). An ATP-binding site is contributed by K14. R89 serves as a coordination point for substrate. The active-site Proton donor/acceptor is the D146. ATP contacts are provided by residues 206-210, 280-282, and 328-332; these read HIGSG, DFR, and GIGEN. E382 is a binding site for Mg(2+).

This sequence belongs to the acetokinase family. In terms of assembly, homodimer. The cofactor is Mg(2+). Mn(2+) serves as cofactor.

Its subcellular location is the cytoplasm. The enzyme catalyses acetate + ATP = acetyl phosphate + ADP. Its pathway is metabolic intermediate biosynthesis; acetyl-CoA biosynthesis; acetyl-CoA from acetate: step 1/2. Its function is as follows. Catalyzes the formation of acetyl phosphate from acetate and ATP. Can also catalyze the reverse reaction. The protein is Acetate kinase of Campylobacter hominis (strain ATCC BAA-381 / DSM 21671 / CCUG 45161 / LMG 19568 / NCTC 13146 / CH001A).